Here is a 373-residue protein sequence, read N- to C-terminus: Spermidine/putrescine import ATP-binding protein PotA (373 aa).

An ABC transporter domain is found at 8 to 238 (FELRGVSKYF…PANLYVARFV (231 aa)). ATP is bound at residue 40 to 47 (GPSGCGKT).

The protein belongs to the ABC transporter superfamily. Spermidine/putrescine importer (TC 3.A.1.11.1) family. As to quaternary structure, the complex is composed of two ATP-binding proteins (PotA), two transmembrane proteins (PotB and PotC) and a solute-binding protein (PotD).

Its subcellular location is the cell inner membrane. The catalysed reaction is ATP + H2O + polyamine-[polyamine-binding protein]Side 1 = ADP + phosphate + polyamineSide 2 + [polyamine-binding protein]Side 1.. Its function is as follows. Part of the ABC transporter complex PotABCD involved in spermidine/putrescine import. Responsible for energy coupling to the transport system. The polypeptide is Spermidine/putrescine import ATP-binding protein PotA (Oleidesulfovibrio alaskensis (strain ATCC BAA-1058 / DSM 17464 / G20) (Desulfovibrio alaskensis)).